A 266-amino-acid polypeptide reads, in one-letter code: Phosphatidate cytidylyltransferase (266 aa).

8 helical membrane passes run 16–36 (FVLI…LFWA), 52–72 (LFQV…WVAA), 78–98 (PIEC…YQKA), 101–121 (SEAI…FGVY), 125–145 (GAVA…GAFF), 164–184 (LEGA…VGMG), 186–206 (LSGG…VAVF), and 237–257 (LDSM…LEIW).

This sequence belongs to the CDS family.

The protein localises to the cell inner membrane. The catalysed reaction is a 1,2-diacyl-sn-glycero-3-phosphate + CTP + H(+) = a CDP-1,2-diacyl-sn-glycerol + diphosphate. It functions in the pathway phospholipid metabolism; CDP-diacylglycerol biosynthesis; CDP-diacylglycerol from sn-glycerol 3-phosphate: step 3/3. The polypeptide is Phosphatidate cytidylyltransferase (cdsA) (Helicobacter pylori (strain ATCC 700392 / 26695) (Campylobacter pylori)).